Reading from the N-terminus, the 280-residue chain is Protein MGF 505-3R (280 aa).

The protein belongs to the asfivirus MGF 505 family.

Functionally, plays a role in virus cell tropism, and may be required for efficient virus replication in macrophages. This chain is Protein MGF 505-3R, found in African swine fever virus (isolate Warthog/Namibia/Wart80/1980) (ASFV).